The chain runs to 448 residues: Trigger factor (448 aa).

The region spanning 172–257 is the PPIase FKBP-type domain; that stretch reads GDRVTVDFVG…MKKIEWPHLP (86 aa).

It belongs to the FKBP-type PPIase family. Tig subfamily.

The protein resides in the cytoplasm. It carries out the reaction [protein]-peptidylproline (omega=180) = [protein]-peptidylproline (omega=0). Its function is as follows. Involved in protein export. Acts as a chaperone by maintaining the newly synthesized protein in an open conformation. Functions as a peptidyl-prolyl cis-trans isomerase. This Burkholderia cenocepacia (strain ATCC BAA-245 / DSM 16553 / LMG 16656 / NCTC 13227 / J2315 / CF5610) (Burkholderia cepacia (strain J2315)) protein is Trigger factor.